We begin with the raw amino-acid sequence, 803 residues long: Na(+)/H(+) antiporter subunit A1 (803 aa).

A run of 19 helical transmembrane segments spans residues 1-21 (MSLLHIAVILPLIFALIIPIL), 30-50 (LGWFVLPIPVVLFIYFLSLIS), 79-99 (LSILFSLLITGIGSLVVLYSI), 117-137 (LFMGAMLGVVLSDNLIILYLF), 166-186 (LIITVFGGLSLLGGFILISLA), 208-228 (FIFAMVLIMLGAFTKSAQVPF), 265-285 (LFAISQGWIWTITLVGLITLF), 300-320 (ILAFSTVSQLGMIMSMLGIGA), 337-357 (FTAAVFHLVNHATFKGALFMI), 377-397 (LTIMPISFTITVITALSMAGI), 427-447 (LGIVFPILAIVGSIFTFVYSI), 472-492 (ILMLLSPIILAVLVVVFGLFP), 522-542 (GITPAFISTLIIWILGILLLL), 591-611 (LVIIFGMLIVVTIVTLLSVPF), 621-641 (IHIYEIAILILLIIAAFMVVI), 646-666 (LFSVIMLGVVGYSVSVLFVFF), 671-691 (LALTQFVVESISTALFLLCFY), 707-727 (LTNALISIGVGLVVIILGLIA), and 764-784 (MDTLFESSVLGIAGLGVYTMI).

This sequence belongs to the CPA3 antiporters (TC 2.A.63) subunit A family. In terms of assembly, may form a heterooligomeric complex that consists of seven subunits: mnhA1, mnhB1, mnhC1, mnhD1, mnhE1, mnhF1 and mnhG1.

The protein resides in the cell membrane. In terms of biological role, mnh complex is a Na(+)/H(+) antiporter involved in Na(+) excretion. In Staphylococcus haemolyticus (strain JCSC1435), this protein is Na(+)/H(+) antiporter subunit A1 (mnhA1).